Consider the following 489-residue polypeptide: MRRFSAAAGARQQQQQGEAVSDRVLRFRGVLVVVLAPVLLISLVLLLMPRAPASATVEGSAGELVAAAGRRWGPRAVSGLGDGSTRYAVIFDAGSSGSRVHVYCFDGNLDLLPIGKEIELFKQKKPGLSAYAMDPQEAAKSLVSLLEEAEKVIPVELREQTPVRVGATAGLRALGTEKSEEILQAVRDLLQDKSSFRSQPEWVTVLDGSQEGAFQWVTINYLLGNLGKPYSHTVGVVDLGGGSVQMAYAISEKDAGKAPPVAEGEDSYVKELLLKGTTYYLYVHSYLRYGLLAARAEILKAGEGNDYRNCMLEGHHGQYRYGDDIFEASGLSSGASYSKCRAVAVRALKVDEPACTHMKCTFGGVWNGGGGDGQKNLFVASFFFDRAAEAGFVNPKAPFAKVKPSDFEEAARRVCKLNVKDAQATYPDVSEENVPYLCMDLVYQYTLLVDGFGVDPYQDITLVKKVPYSNSFVEAAWPLGSAIEVASSS.

Over 1–28 the chain is Cytoplasmic; it reads MRRFSAAAGARQQQQQGEAVSDRVLRFR. The helical; Signal-anchor for type II membrane protein transmembrane segment at 29–49 threads the bilayer; sequence GVLVVVLAPVLLISLVLLLMP. Over 50 to 489 the chain is Extracellular; that stretch reads RAPASATVEG…GSAIEVASSS (440 aa). 89-99 is a binding site for ATP; it reads VIFDAGSSGSR. E211 acts as the Proton acceptor in catalysis. Residue 235–245 coordinates ATP; sequence GVVDLGGGSVQ.

It belongs to the GDA1/CD39 NTPase family. Ca(2+) serves as cofactor.

The protein resides in the membrane. The enzyme catalyses a ribonucleoside 5'-triphosphate + 2 H2O = a ribonucleoside 5'-phosphate + 2 phosphate + 2 H(+). Its function is as follows. Catalyzes the hydrolysis of phosphoanhydride bonds of nucleoside tri- and di-phosphates. The chain is Probable apyrase 1 (APY1) from Oryza sativa subsp. japonica (Rice).